The primary structure comprises 433 residues: Chaperone SurA (433 aa).

The N-terminal stretch at 1–20 (MKNWRTLIFGLMFSVSTAFA) is a signal peptide. 2 PpiC domains span residues 171–272 (DTEL…KVND) and 282–382 (VTEV…QLLD).

It localises to the periplasm. The enzyme catalyses [protein]-peptidylproline (omega=180) = [protein]-peptidylproline (omega=0). In terms of biological role, chaperone involved in the correct folding and assembly of outer membrane proteins. Recognizes specific patterns of aromatic residues and the orientation of their side chains, which are found more frequently in integral outer membrane proteins. May act in both early periplasmic and late outer membrane-associated steps of protein maturation. The polypeptide is Chaperone SurA (Photorhabdus laumondii subsp. laumondii (strain DSM 15139 / CIP 105565 / TT01) (Photorhabdus luminescens subsp. laumondii)).